Consider the following 197-residue polypeptide: MKKRRSKKERQELLQQTIETNPFITDEDLAEKFQVSIQTVRLDRMELSIPELRERIKHVATKQHEEDVKSLPLEEVVGEIIDIELDRHAISIFEVKVEHVFKRNQIARGHHLFAQANSLAVAVIDEELALTAKSTIRYIRPVKLGERVVAKARVEDVENGKGRTVVKVRSFVGEELVFTGTFEMYRSSNYSEEGNNL.

The protein belongs to the FapR family.

Functionally, transcriptional factor involved in regulation of membrane lipid biosynthesis by repressing genes involved in fatty acid and phospholipid metabolism. The sequence is that of Transcription factor FapR from Bacillus cereus (strain 03BB102).